The sequence spans 3103 residues: Extracellular matrix protein 3 (3103 aa).

A signal peptide spans 1-19 (MASALLCFLAAILPGMIAA). The Extracellular portion of the chain corresponds to 20 to 3047 (QNTWVLGTSD…TYELAPKGTN (3028 aa)). CSPG repeat units follow at residues 289-388 (PPSL…LEIV), 411-499 (APVV…FRMT), 520-630 (APIV…FRVV), 656-762 (PPEM…FVVQ), 784-875 (QPPT…LEIT), 901-993 (LPPG…LTLS), 1022-1124 (APNV…FRCT), 1145-1238 (EEPQ…VLLT), 1259-1357 (TPRL…FDIT), 1378-1470 (VHPS…FQVT), 1490-1579 (KEPV…FIVT), and 1613-1710 (APQI…VEVR). N-linked (GlcNAc...) asparagine glycosylation is found at Asn-330 and Asn-453. Residues Asn-989, Asn-1024, Asn-1042, Asn-1207, Asn-1294, Asn-1321, and Asn-1327 are each glycosylated (N-linked (GlcNAc...) asparagine). N-linked (GlcNAc...) asparagine glycans are attached at residues Asn-1542, Asn-1674, Asn-1679, Asn-1725, and Asn-1739. Calx-beta domains lie at 1717–1816 (LPNQ…IILH), 1829–1942 (AVVT…VKLS), 1956–2062 (NVII…LVLN), and 2077–2179 (ITIN…LVLG). Asn-2080, Asn-2195, Asn-2274, Asn-2385, and Asn-2932 each carry an N-linked (GlcNAc...) asparagine glycan. A Calx-beta 5 domain is found at 2197–2302 (TVVTVHDVGD…MREAFTLHIT (106 aa)). The segment at 2983 to 3013 (SSGIGKRETEHHAISSRQRRQANSEALVDPA) is disordered. The chain crosses the membrane as a helical span at residues 3048 to 3068 (VVMIAVVIGVILIILLVALVI). Over 3069 to 3103 (GVVVRRRQAKQQPVVVVNGSAKVVSNVHFDDNTEV) the chain is Cytoplasmic.

This sequence belongs to the FRAS1 family. In terms of tissue distribution, component of extracellular matrix fibers that interact with PMC filopodia during gastrulation (at protein level).

It localises to the cell membrane. Functionally, extracellular matrix protein that may serve as substrate for the migratory primary mesenchyme cells (PMCs), the interaction possibly providing guidance information to migrating PMCs. The sequence is that of Extracellular matrix protein 3 (ECM3) from Lytechinus variegatus (Green sea urchin).